Here is a 237-residue protein sequence, read N- to C-terminus: uncharacterized protein (237 aa).

Residues 3–116 (RILLVEDDER…VVMAKIKSVL (114 aa)) enclose the Response regulatory domain. Asp-52 is subject to 4-aspartylphosphate. The segment at residues 131–229 (SRIVELGGLT…IRGQGYQFQV (99 aa)) is a DNA-binding region (ompR/PhoB-type).

Phosphorylated by YvcQ.

It localises to the cytoplasm. In terms of biological role, member of the two-component regulatory system YvcQ/YvcP. This is an uncharacterized protein from Bacillus subtilis (strain 168).